The sequence spans 278 residues: MIEPFKVKDVEIGGPKLFLIAGPCVIESEAHAMKMAEAISGVCKAMKIPYIFKASYDKANRTSLSSFRGPGLHEGLRILAKVADEVNVPVLTDVHDTEQATAAGDIVDVLQIPAFLCRQTDLLVAAAKTGKVVNVKKGQFVAPNDMQYAVTKVRESGNQRVCLTERGASFGYNNLVVDMRALPIMRQFAPVIFDATHSVQLPSAGKDGHAVSGGQPEFIPVLSRAAVAAGVDGVFMEVHDDPPHAKSDGANALDLKLLRGVLTSLLRIREAVTPPAAS.

The protein belongs to the KdsA family.

It is found in the cytoplasm. It carries out the reaction D-arabinose 5-phosphate + phosphoenolpyruvate + H2O = 3-deoxy-alpha-D-manno-2-octulosonate-8-phosphate + phosphate. It functions in the pathway carbohydrate biosynthesis; 3-deoxy-D-manno-octulosonate biosynthesis; 3-deoxy-D-manno-octulosonate from D-ribulose 5-phosphate: step 2/3. It participates in bacterial outer membrane biogenesis; lipopolysaccharide biosynthesis. The chain is 2-dehydro-3-deoxyphosphooctonate aldolase from Koribacter versatilis (strain Ellin345).